The primary structure comprises 218 residues: Elongation factor Ts (218 aa).

The interval 82–85 (TDFV) is involved in Mg(2+) ion dislocation from EF-Tu.

This sequence belongs to the EF-Ts family.

Its subcellular location is the cytoplasm. Associates with the EF-Tu.GDP complex and induces the exchange of GDP to GTP. It remains bound to the aminoacyl-tRNA.EF-Tu.GTP complex up to the GTP hydrolysis stage on the ribosome. The polypeptide is Elongation factor Ts (Picosynechococcus sp. (strain ATCC 27264 / PCC 7002 / PR-6) (Agmenellum quadruplicatum)).